Consider the following 286-residue polypeptide: 1D-myo-inositol 2-acetamido-2-deoxy-alpha-D-glucopyranoside deacetylase (286 aa).

Zn(2+) is bound by residues H12, D15, and H147.

This sequence belongs to the MshB deacetylase family. Zn(2+) is required as a cofactor.

It catalyses the reaction 1D-myo-inositol 2-acetamido-2-deoxy-alpha-D-glucopyranoside + H2O = 1D-myo-inositol 2-amino-2-deoxy-alpha-D-glucopyranoside + acetate. Its function is as follows. Catalyzes the deacetylation of 1D-myo-inositol 2-acetamido-2-deoxy-alpha-D-glucopyranoside (GlcNAc-Ins) in the mycothiol biosynthesis pathway. The protein is 1D-myo-inositol 2-acetamido-2-deoxy-alpha-D-glucopyranoside deacetylase of Thermobifida fusca (strain YX).